Here is a 159-residue protein sequence, read N- to C-terminus: V-type proton ATPase 16 kDa proteolipid subunit c (159 aa).

Residues 1–11 lie on the Lumenal side of the membrane; sequence MSEEGSPMYSP. Residues 12–32 form a helical membrane-spanning segment; it reads FFGVMGAASAMVFSALGAAYG. Residues 33-54 are Cytoplasmic-facing; sequence TAKSGVGISAMSVMRPELIMKC. A helical transmembrane segment spans residues 55-75; the sequence is IIPVVMAGIIAIYGLVVAVLI. Residues 76–93 are Lumenal-facing; the sequence is AGKLDEAPTYTLYQGFVH. Residues 94-114 form a helical membrane-spanning segment; sequence MGAGLSVGLSGLAAGFAIGIV. Over 115-132 the chain is Cytoplasmic; sequence GDAGVRGTAQQPRLYVGM. The chain crosses the membrane as a helical span at residues 133 to 153; that stretch reads ILILIFAEVLGLYGLIVAIFL. The Lumenal portion of the chain corresponds to 154–159; the sequence is YTKTSS.

This sequence belongs to the V-ATPase proteolipid subunit family. V-ATPase is a heteromultimeric enzyme made up of two complexes: the ATP-hydrolytic V1 complex and the proton translocation V0 complex. The V1 complex consists of three catalytic AB heterodimers that form a heterohexamer, three peripheral stalks each consisting of EG heterodimers, one central rotor including subunits D and F, and the regulatory subunits C and H. The proton translocation complex V0 consists of the proton transport subunit a, a ring of proteolipid subunits c9c'', rotary subunit d, subunits e and f, and two accessory subunits.

Its subcellular location is the vacuole membrane. Its function is as follows. Proton-conducting pore forming subunit of the V0 complex of vacuolar(H+)-ATPase (V-ATPase), a multisubunit enzyme composed of a peripheral complex (V1) that hydrolyzes ATP and a membrane integral complex (V0) that translocates protons. V-ATPase is responsible for acidifying and maintaining the pH of intracellular compartments and in some cell types, is targeted to the plasma membrane, where it is responsible for acidifying the extracellular environment. The sequence is that of V-type proton ATPase 16 kDa proteolipid subunit c from Nephrops norvegicus (Norway lobster).